Consider the following 205-residue polypeptide: Methylthioribulose-1-phosphate dehydratase (205 aa).

The Zn(2+) site is built by histidine 98 and histidine 100.

The protein belongs to the aldolase class II family. MtnB subfamily. The cofactor is Zn(2+).

The catalysed reaction is 5-(methylsulfanyl)-D-ribulose 1-phosphate = 5-methylsulfanyl-2,3-dioxopentyl phosphate + H2O. The protein operates within amino-acid biosynthesis; L-methionine biosynthesis via salvage pathway; L-methionine from S-methyl-5-thio-alpha-D-ribose 1-phosphate: step 2/6. Catalyzes the dehydration of methylthioribulose-1-phosphate (MTRu-1-P) into 2,3-diketo-5-methylthiopentyl-1-phosphate (DK-MTP-1-P). The polypeptide is Methylthioribulose-1-phosphate dehydratase (Gluconacetobacter diazotrophicus (strain ATCC 49037 / DSM 5601 / CCUG 37298 / CIP 103539 / LMG 7603 / PAl5)).